A 433-amino-acid chain; its full sequence is MAKIVKVIGREIIDSRGNPTVEAEVHLEGGFVGLAAAPSGASTGSREALELRDGDKSRFLGKGVLKAVSAVNNEIAQAVVGKDASNQAEIDQIMIDLDGTDNKSKFGANAILAVSLANAKAAAASKGLPLYAYIAELNGTPGQYSMPLPMMNIINGGEHADNNVDIQEFMIQPVGAKTLREAVRIGSEVFHNLAKVLKAKGYNTAVGDEGGFAPNLGSNAEALACIKEAVEKAGYTLGKDVTLAMDCASSEFYNKETGKYEMKGEGRSFTSQEFTHYLEELCKQYPIVSIEDGQDESDWDGFAYQTKVLGDNVQLVGDDLFVTNTKILKEGIEKGIANSILIKFNQIGSLTETLAAIKMAKDAGYTAVISHRSGETEDATIADLAVGTAAGQIKTGSMSRSDRVAKYNQLIRIEEALGDKAPFLGLKAVKGQA.

A (2R)-2-phosphoglycerate-binding site is contributed by glutamine 167. Glutamate 209 serves as the catalytic Proton donor. Mg(2+) is bound by residues aspartate 246, glutamate 291, and aspartate 318. (2R)-2-phosphoglycerate-binding residues include lysine 343, arginine 372, serine 373, and lysine 394. Lysine 343 acts as the Proton acceptor in catalysis.

Belongs to the enolase family. As to quaternary structure, component of the RNA degradosome, a multiprotein complex involved in RNA processing and mRNA degradation. It depends on Mg(2+) as a cofactor.

Its subcellular location is the cytoplasm. The protein localises to the secreted. It localises to the cell surface. The catalysed reaction is (2R)-2-phosphoglycerate = phosphoenolpyruvate + H2O. Its pathway is carbohydrate degradation; glycolysis; pyruvate from D-glyceraldehyde 3-phosphate: step 4/5. In terms of biological role, catalyzes the reversible conversion of 2-phosphoglycerate (2-PG) into phosphoenolpyruvate (PEP). It is essential for the degradation of carbohydrates via glycolysis. The protein is Enolase of Actinobacillus succinogenes (strain ATCC 55618 / DSM 22257 / CCUG 43843 / 130Z).